A 784-amino-acid chain; its full sequence is Probable phosphoketolase (784 aa).

It belongs to the XFP family. Requires thiamine diphosphate as cofactor.

The sequence is that of Probable phosphoketolase from Rhodopseudomonas palustris (strain BisB5).